The chain runs to 398 residues: 4-hydroxy-3-methylbut-2-enyl diphosphate reductase (398 aa).

Cys-66 serves as a coordination point for [4Fe-4S] cluster. Residue His-96 participates in (2E)-4-hydroxy-3-methylbut-2-enyl diphosphate binding. A dimethylallyl diphosphate-binding site is contributed by His-96. His-96 is an isopentenyl diphosphate binding site. Cys-157 provides a ligand contact to [4Fe-4S] cluster. His-185 lines the (2E)-4-hydroxy-3-methylbut-2-enyl diphosphate pocket. His-185 contacts dimethylallyl diphosphate. Residue His-185 participates in isopentenyl diphosphate binding. The Proton donor role is filled by Glu-187. A (2E)-4-hydroxy-3-methylbut-2-enyl diphosphate-binding site is contributed by Thr-250. Cys-288 lines the [4Fe-4S] cluster pocket. Residues Ser-317, Ser-318, Asn-319, and Ser-380 each coordinate (2E)-4-hydroxy-3-methylbut-2-enyl diphosphate. 4 residues coordinate dimethylallyl diphosphate: Ser-317, Ser-318, Asn-319, and Ser-380. Isopentenyl diphosphate-binding residues include Ser-317, Ser-318, Asn-319, and Ser-380.

The protein belongs to the IspH family. The cofactor is [4Fe-4S] cluster.

The catalysed reaction is isopentenyl diphosphate + 2 oxidized [2Fe-2S]-[ferredoxin] + H2O = (2E)-4-hydroxy-3-methylbut-2-enyl diphosphate + 2 reduced [2Fe-2S]-[ferredoxin] + 2 H(+). It catalyses the reaction dimethylallyl diphosphate + 2 oxidized [2Fe-2S]-[ferredoxin] + H2O = (2E)-4-hydroxy-3-methylbut-2-enyl diphosphate + 2 reduced [2Fe-2S]-[ferredoxin] + 2 H(+). Its pathway is isoprenoid biosynthesis; dimethylallyl diphosphate biosynthesis; dimethylallyl diphosphate from (2E)-4-hydroxy-3-methylbutenyl diphosphate: step 1/1. It functions in the pathway isoprenoid biosynthesis; isopentenyl diphosphate biosynthesis via DXP pathway; isopentenyl diphosphate from 1-deoxy-D-xylulose 5-phosphate: step 6/6. Functionally, catalyzes the conversion of 1-hydroxy-2-methyl-2-(E)-butenyl 4-diphosphate (HMBPP) into a mixture of isopentenyl diphosphate (IPP) and dimethylallyl diphosphate (DMAPP). Acts in the terminal step of the DOXP/MEP pathway for isoprenoid precursor biosynthesis. This chain is 4-hydroxy-3-methylbut-2-enyl diphosphate reductase, found in Prochlorococcus marinus (strain MIT 9515).